The chain runs to 62 residues: uncharacterized protein (62 aa).

Positions Met1 to Glu13 are enriched in polar residues. The interval Met1–Gly62 is disordered. Over residues Gly14–Met28 the composition is skewed to basic and acidic residues.

This is an uncharacterized protein from Mycobacterium tuberculosis (strain ATCC 25618 / H37Rv).